The following is a 411-amino-acid chain: Serine--tRNA ligase (411 aa).

An L-serine-binding site is contributed by 226–228; sequence TSE. 257 to 259 is a binding site for ATP; that stretch reads RKE. Glu280 is an L-serine binding site. 344-347 contacts ATP; sequence EISS. Ser379 lines the L-serine pocket.

Belongs to the class-II aminoacyl-tRNA synthetase family. Type-1 seryl-tRNA synthetase subfamily. In terms of assembly, homodimer. The tRNA molecule binds across the dimer.

The protein localises to the cytoplasm. It carries out the reaction tRNA(Ser) + L-serine + ATP = L-seryl-tRNA(Ser) + AMP + diphosphate + H(+). The enzyme catalyses tRNA(Sec) + L-serine + ATP = L-seryl-tRNA(Sec) + AMP + diphosphate + H(+). It participates in aminoacyl-tRNA biosynthesis; selenocysteinyl-tRNA(Sec) biosynthesis; L-seryl-tRNA(Sec) from L-serine and tRNA(Sec): step 1/1. In terms of biological role, catalyzes the attachment of serine to tRNA(Ser). Is also able to aminoacylate tRNA(Sec) with serine, to form the misacylated tRNA L-seryl-tRNA(Sec), which will be further converted into selenocysteinyl-tRNA(Sec). This is Serine--tRNA ligase from Campylobacter jejuni subsp. jejuni serotype O:2 (strain ATCC 700819 / NCTC 11168).